Here is a 476-residue protein sequence, read N- to C-terminus: Serine protease HTRA4 (476 aa).

Residues 1-31 form the signal peptide; sequence MIRPQLRTAGLGRCLLPGLLLLLVPVLWAGA. Residues 36 to 109 enclose the IGFBP N-terminal domain; the sequence is TQPSCPAVCQ…PGFPSTCGCP (74 aa). 8 cysteine pairs are disulfide-bonded: C40–C66, C44–C68, C49–C69, C55–C72, C80–C94, C88–C106, C108–C127, and C116–C152. A Kazal-like domain is found at 88–154; sequence CAPGLQCLQP…VPVQWGNCGD (67 aa). The interval 202-362 is serine protease; sequence GSGFIVSEDG…IPSDRVRQFL (161 aa). Active-site charge relay system residues include H218, D248, and S326. One can recognise a PDZ domain in the interval 383–474; that stretch reads LQMLSLTVPL…NLLLTVIPET (92 aa).

The protein belongs to the peptidase S1C family.

The protein localises to the secreted. Serine protease. The chain is Serine protease HTRA4 (HTRA4) from Homo sapiens (Human).